A 321-amino-acid chain; its full sequence is Ribosomal RNA small subunit methyltransferase H (321 aa).

S-adenosyl-L-methionine contacts are provided by residues 40-42 (GGH), Asp-60, Phe-84, Asp-106, and Gln-113.

This sequence belongs to the methyltransferase superfamily. RsmH family.

It is found in the cytoplasm. The catalysed reaction is cytidine(1402) in 16S rRNA + S-adenosyl-L-methionine = N(4)-methylcytidine(1402) in 16S rRNA + S-adenosyl-L-homocysteine + H(+). In terms of biological role, specifically methylates the N4 position of cytidine in position 1402 (C1402) of 16S rRNA. This chain is Ribosomal RNA small subunit methyltransferase H, found in Pasteurella multocida (strain Pm70).